The following is a 120-amino-acid chain: Peptidyl-tRNA hydrolase (120 aa).

This sequence belongs to the PTH2 family.

Its subcellular location is the cytoplasm. It catalyses the reaction an N-acyl-L-alpha-aminoacyl-tRNA + H2O = an N-acyl-L-amino acid + a tRNA + H(+). The natural substrate for this enzyme may be peptidyl-tRNAs which drop off the ribosome during protein synthesis. The chain is Peptidyl-tRNA hydrolase from Saccharolobus islandicus (strain Y.N.15.51 / Yellowstone #2) (Sulfolobus islandicus).